The sequence spans 175 residues: Nucleoside triphosphate/diphosphate phosphatase (175 aa).

Residue Arg-23 is the Proton donor of the active site. Mg(2+)-binding residues include Asn-87, Asp-103, Asp-105, Asp-107, Asp-120, and Glu-123.

This sequence belongs to the Ntdp family. It depends on Mg(2+) as a cofactor.

It carries out the reaction a ribonucleoside 5'-triphosphate + H2O = a ribonucleoside 5'-diphosphate + phosphate + H(+). The enzyme catalyses a ribonucleoside 5'-diphosphate + H2O = a ribonucleoside 5'-phosphate + phosphate + H(+). Has nucleoside phosphatase activity towards nucleoside triphosphates and nucleoside diphosphates. This Listeria innocua serovar 6a (strain ATCC BAA-680 / CLIP 11262) protein is Nucleoside triphosphate/diphosphate phosphatase.